The chain runs to 306 residues: Glutathione transport system permease protein GsiC (306 aa).

Residues 1 to 8 (MLNYVIKR) are Cytoplasmic-facing. The helical transmembrane segment at 9-29 (LLGLIPTLFIVSVLVFLFVHM) threads the bilayer. Residues 30-102 (LPGDPARLIA…SRFMPTLWLT (73 aa)) lie on the Periplasmic side of the membrane. The region spanning 95 to 292 (FMPTLWLTIT…LEFILINLVV (198 aa)) is the ABC transmembrane type-1 domain. The helical transmembrane segment at 103-123 (ITSMVWAVIFGMAAGIIAAVW) threads the bilayer. Residues 124 to 134 (RNRWPDRLSMT) lie on the Cytoplasmic side of the membrane. Residues 135-155 (IAVSGISFPAFALGMLLIQVF) traverse the membrane as a helical segment. Residues 156-168 (SVELGWLPTVGAD) lie on the Periplasmic side of the membrane. Residues 169 to 189 (SWQHYILPSLTLGAAVAAVMA) traverse the membrane as a helical segment. At 190-228 (RFTRASFVDVLSEDYMRTARAKGVSETWVVLKHGLRNAM) the chain is on the cytoplasmic side. The helical transmembrane segment at 229–249 (IPVVTMMGLQFGFLLGGSIVV) threads the bilayer. Residues 250–277 (EKVFNWPGLGRLLVDSVEMRDYPVIQAE) lie on the Periplasmic side of the membrane. The helical transmembrane segment at 278-298 (ILLFSLEFILINLVVDVLYAA) threads the bilayer. The Cytoplasmic segment spans residues 299-306 (INPAIRYK).

The protein belongs to the binding-protein-dependent transport system permease family. As to quaternary structure, the complex is composed of two ATP-binding proteins (GsiA), two transmembrane proteins (GsiC and GsiD) and a solute-binding protein (GsiB).

The protein localises to the cell inner membrane. Functionally, part of the ABC transporter complex GsiABCD involved in glutathione import. Probably responsible for the translocation of the substrate across the membrane. The sequence is that of Glutathione transport system permease protein GsiC from Escherichia coli O6:H1 (strain CFT073 / ATCC 700928 / UPEC).